Here is a 349-residue protein sequence, read N- to C-terminus: Diacylglycerol O-acyltransferase 2B (349 aa).

Transmembrane regions (helical) follow at residues 44 to 64 (ICLI…ILIM) and 114 to 134 (YIMS…NFAT).

It belongs to the diacylglycerol acyltransferase family.

It is found in the endoplasmic reticulum membrane. The enzyme catalyses an acyl-CoA + a 1,2-diacyl-sn-glycerol = a triacyl-sn-glycerol + CoA. The protein operates within glycerolipid metabolism; triacylglycerol biosynthesis. In terms of biological role, catalyzes the terminal and only committed step in triacylglycerol synthesis by using diacylglycerol and fatty acyl CoA as substrates. Required for storage lipid synthesis. The protein is Diacylglycerol O-acyltransferase 2B (DGAT2B) of Umbelopsis ramanniana (Oleaginous fungus).